The primary structure comprises 361 residues: D-alanine--D-alanine ligase (361 aa).

One can recognise an ATP-grasp domain in the interval 134–344; the sequence is KILAQRAGVP…YTDLITKLID (211 aa). Residue 169–224 participates in ATP binding; the sequence is ASQLGSDLFVKPSNQGSSVGVSHVTNEKEYKVALAEAFKYDDKVLVEETVHGTEVE. Mg(2+) is bound by residues D297, E311, and N313.

It belongs to the D-alanine--D-alanine ligase family. It depends on Mg(2+) as a cofactor. Mn(2+) is required as a cofactor.

Its subcellular location is the cytoplasm. The enzyme catalyses 2 D-alanine + ATP = D-alanyl-D-alanine + ADP + phosphate + H(+). Its pathway is cell wall biogenesis; peptidoglycan biosynthesis. Its function is as follows. Cell wall formation. This chain is D-alanine--D-alanine ligase, found in Lactobacillus johnsonii (strain CNCM I-12250 / La1 / NCC 533).